A 402-amino-acid polypeptide reads, in one-letter code: uncharacterized protein (402 aa).

12 helical membrane-spanning segments follow: residues 26–46 (IFMSFLKLGMVAFGGPTAIAY), 67–87 (VALAQIIPGASVMQVAAYVGF), 96–116 (FAAFMAYALPAFLIMLFLTII), 126–146 (TVSIFEALRIIVVSLAANGTL), 168–188 (LFILKFSPFIVIFVSIFIGFL), 213–233 (YVAYLLFGVFLFNLILYMIDS), 235–255 (LFLLSTLMMKVDVFAFGGGYG), 289–309 (PIVITATFVGYIVGGFIGSII), 312–332 (ISVFTPSFIILLSSIPIFDSL), 338–358 (FKNILHMILVSFVGLLVAVTI), 360–380 (FALLVDWSIQALIIFIVSFLL), and 381–401 (LYKKYNMLLVVLLSLVLGYLI).

This sequence belongs to the chromate ion transporter (CHR) (TC 2.A.51) family.

It localises to the cell membrane. This is an uncharacterized protein from Methanocaldococcus jannaschii (strain ATCC 43067 / DSM 2661 / JAL-1 / JCM 10045 / NBRC 100440) (Methanococcus jannaschii).